The chain runs to 303 residues: Ribosomal RNA small subunit methyltransferase A (303 aa).

Positions 1–19 (MSSRPPASFSATFSAARSS) are enriched in low complexity. The segment at 1–34 (MSSRPPASFSATFSAARSSKCVPPPRRPSTDVSL) is disordered. Residues H55, L57, G82, E104, D130, and N149 each contribute to the S-adenosyl-L-methionine site.

It belongs to the class I-like SAM-binding methyltransferase superfamily. rRNA adenine N(6)-methyltransferase family. RsmA subfamily.

Its subcellular location is the cytoplasm. It catalyses the reaction adenosine(1518)/adenosine(1519) in 16S rRNA + 4 S-adenosyl-L-methionine = N(6)-dimethyladenosine(1518)/N(6)-dimethyladenosine(1519) in 16S rRNA + 4 S-adenosyl-L-homocysteine + 4 H(+). Its function is as follows. Specifically dimethylates two adjacent adenosines (A1518 and A1519) in the loop of a conserved hairpin near the 3'-end of 16S rRNA in the 30S particle. May play a critical role in biogenesis of 30S subunits. The sequence is that of Ribosomal RNA small subunit methyltransferase A from Gluconobacter oxydans (strain 621H) (Gluconobacter suboxydans).